Consider the following 118-residue polypeptide: Large ribosomal subunit protein bL20 (118 aa).

This sequence belongs to the bacterial ribosomal protein bL20 family.

Functionally, binds directly to 23S ribosomal RNA and is necessary for the in vitro assembly process of the 50S ribosomal subunit. It is not involved in the protein synthesizing functions of that subunit. In Sulfurihydrogenibium sp. (strain YO3AOP1), this protein is Large ribosomal subunit protein bL20.